The primary structure comprises 54 residues: SPbeta prophage-derived uncharacterized protein YoqE (54 aa).

This chain is SPbeta prophage-derived uncharacterized protein YoqE (yoqE), found in Bacillus subtilis (strain 168).